We begin with the raw amino-acid sequence, 522 residues long: Serine/threonine-protein kinase BSK1-2 (522 aa).

A disordered region spans residues 1–54 (MGCCGSSLRVGSHAPEKPPRRARPPPPPPQPHHPRRPSFTLNAHQAAASSSAAS). Gly2 is lipidated: N-myristoyl glycine. The region spanning 79–338 (ANIVSESGEK…KLVSILQPLQ (260 aa)) is the Protein kinase domain. Residues 85 to 93 (SGEKAPNLV) and Lys111 contribute to the ATP site. Catalysis depends on Asp205, which acts as the Proton acceptor.

This sequence belongs to the protein kinase superfamily. Ser/Thr protein kinase family.

Its subcellular location is the cell membrane. The catalysed reaction is L-seryl-[protein] + ATP = O-phospho-L-seryl-[protein] + ADP + H(+). It catalyses the reaction L-threonyl-[protein] + ATP = O-phospho-L-threonyl-[protein] + ADP + H(+). Functionally, probable serine/threonine kinase that functions as a positive regulator of plant immunity. May be involved in the regulation of pattern-triggered immunity (PTI). Does not seem to be involved in responses to brassinosteroid (BR) signaling. This chain is Serine/threonine-protein kinase BSK1-2, found in Oryza sativa subsp. japonica (Rice).